Reading from the N-terminus, the 319-residue chain is ATP-dependent 6-phosphofructokinase (319 aa).

G11 is a binding site for ATP. ADP contacts are provided by residues 21–25 (RSVVR) and D59. ATP contacts are provided by residues 72-73 (RC) and 102-105 (GDGS). Mg(2+) is bound at residue D103. Position 125 to 127 (125 to 127 (TID)) interacts with substrate. D127 functions as the Proton acceptor in the catalytic mechanism. R154 serves as a coordination point for ADP. Substrate-binding positions include R162 and 169–171 (MGR). Residues 185–187 (GAE), R211, and 213–215 (KKH) contribute to the ADP site. Residues E222, R243, and 249 to 252 (HVQR) each bind substrate.

This sequence belongs to the phosphofructokinase type A (PFKA) family. ATP-dependent PFK group I subfamily. Prokaryotic clade 'B1' sub-subfamily. In terms of assembly, homotetramer. Requires Mg(2+) as cofactor.

It localises to the cytoplasm. It carries out the reaction beta-D-fructose 6-phosphate + ATP = beta-D-fructose 1,6-bisphosphate + ADP + H(+). It participates in carbohydrate degradation; glycolysis; D-glyceraldehyde 3-phosphate and glycerone phosphate from D-glucose: step 3/4. Allosterically activated by ADP and other diphosphonucleosides, and allosterically inhibited by phosphoenolpyruvate. In terms of biological role, catalyzes the phosphorylation of D-fructose 6-phosphate to fructose 1,6-bisphosphate by ATP, the first committing step of glycolysis. This chain is ATP-dependent 6-phosphofructokinase, found in Geobacillus stearothermophilus (Bacillus stearothermophilus).